The following is a 546-amino-acid chain: Chaperonin GroEL 1 (546 aa).

Residues 30–33 (TLGP), Lys-51, 87–91 (DGTTT), Gly-415, and Asp-495 contribute to the ATP site. A disordered region spans residues 527–546 (DAAPTAAPGGPGAGGPGFDF). Gly residues predominate over residues 535–546 (GGPGAGGPGFDF).

This sequence belongs to the chaperonin (HSP60) family. Forms a cylinder of 14 subunits composed of two heptameric rings stacked back-to-back. Interacts with the co-chaperonin GroES.

The protein localises to the cytoplasm. It catalyses the reaction ATP + H2O + a folded polypeptide = ADP + phosphate + an unfolded polypeptide.. In terms of biological role, together with its co-chaperonin GroES, plays an essential role in assisting protein folding. The GroEL-GroES system forms a nano-cage that allows encapsulation of the non-native substrate proteins and provides a physical environment optimized to promote and accelerate protein folding. The polypeptide is Chaperonin GroEL 1 (Burkholderia lata (strain ATCC 17760 / DSM 23089 / LMG 22485 / NCIMB 9086 / R18194 / 383)).